Reading from the N-terminus, the 199-residue chain is uncharacterized protein (199 aa).

A run of 4 helical transmembrane segments spans residues Cys-35–Asp-55, Phe-57–Phe-77, Leu-94–Gly-114, and Tyr-131–Ala-151.

The protein localises to the membrane. This is an uncharacterized protein from Caenorhabditis elegans.